We begin with the raw amino-acid sequence, 458 residues long: D-inositol 3-phosphate glycosyltransferase (458 aa).

Residue histidine 16 coordinates 1D-myo-inositol 3-phosphate. UDP-N-acetyl-alpha-D-glucosamine-binding positions include 22-23 and glycine 30; that span reads QP. Residues 27–32, lysine 85, tyrosine 118, threonine 142, and arginine 162 contribute to the 1D-myo-inositol 3-phosphate site; that span reads DAGGMN. The UDP-N-acetyl-alpha-D-glucosamine site is built by arginine 236, lysine 241, and glutamine 302. 3 residues coordinate Mg(2+): tyrosine 311, arginine 312, and serine 314. 2 residues coordinate UDP-N-acetyl-alpha-D-glucosamine: glutamate 324 and glutamate 332. Residue threonine 338 coordinates Mg(2+). Residues 428–458 are disordered; that stretch reads VAAQNVTGSSSRTRRPWRRRRSTLLPMTGRS. Basic residues predominate over residues 439–449; sequence RTRRPWRRRRS.

This sequence belongs to the glycosyltransferase group 1 family. MshA subfamily. In terms of assembly, homodimer.

It carries out the reaction 1D-myo-inositol 3-phosphate + UDP-N-acetyl-alpha-D-glucosamine = 1D-myo-inositol 2-acetamido-2-deoxy-alpha-D-glucopyranoside 3-phosphate + UDP + H(+). In terms of biological role, catalyzes the transfer of a N-acetyl-glucosamine moiety to 1D-myo-inositol 3-phosphate to produce 1D-myo-inositol 2-acetamido-2-deoxy-glucopyranoside 3-phosphate in the mycothiol biosynthesis pathway. This is D-inositol 3-phosphate glycosyltransferase from Gordonia bronchialis (strain ATCC 25592 / DSM 43247 / BCRC 13721 / JCM 3198 / KCTC 3076 / NBRC 16047 / NCTC 10667) (Rhodococcus bronchialis).